A 166-amino-acid polypeptide reads, in one-letter code: Regulatory protein RecX (166 aa).

It belongs to the RecX family.

The protein localises to the cytoplasm. Modulates RecA activity. This chain is Regulatory protein RecX, found in Klebsiella pneumoniae (strain 342).